The primary structure comprises 190 residues: Elongation factor P-like protein (190 aa).

It belongs to the elongation factor P family.

This chain is Elongation factor P-like protein, found in Klebsiella pneumoniae subsp. pneumoniae (strain ATCC 700721 / MGH 78578).